The sequence spans 192 residues: Large ribosomal subunit protein uL5 (192 aa).

Belongs to the universal ribosomal protein uL5 family. Part of the 50S ribosomal subunit; contacts the 5S rRNA and probably tRNA. Forms a bridge to the 30S subunit in the 70S ribosome.

This is one of the proteins that bind and probably mediate the attachment of the 5S RNA into the large ribosomal subunit, where it forms part of the central protuberance. In the 70S ribosome it contacts protein S13 of the 30S subunit (bridge B1b), connecting the 2 subunits; this bridge is implicated in subunit movement. May contact the P site tRNA; the 5S rRNA and some of its associated proteins might help stabilize positioning of ribosome-bound tRNAs. The sequence is that of Large ribosomal subunit protein uL5 from Aeropyrum pernix (strain ATCC 700893 / DSM 11879 / JCM 9820 / NBRC 100138 / K1).